We begin with the raw amino-acid sequence, 229 residues long: Non-structural protein P8 (229 aa).

2 helical membrane-spanning segments follow: residues 119-139 (IIHM…VCTL) and 162-182 (SLNP…MVCA).

Belongs to the orbivirus NS3 family. In terms of assembly, forms homooligomers via coiled-coil motif. Interacts with host OPTN; this interaction inhibits innate immune response.

It is found in the host cell membrane. It localises to the host Golgi apparatus. In terms of biological role, plays a role in the inhibition of host innate immune response. Interacts with host OPTN and thus inhibits the recruitment of TBK1 to the host Golgi apparatus. In turn, downstream partner IRF3 cannot be activated and IFN-beta production is impaired. Functionally, facilitates viral particle release either by increasing plasma membrane permeability through a viroporin-like activity or by viral budding. This Antilocapra americana (Pronghorn) protein is Non-structural protein P8 (Segment-10).